The chain runs to 227 residues: Phosphoribosylformylglycinamidine synthase subunit PurQ (227 aa).

The 223-residue stretch at 3 to 225 (FAVIVFPGSN…LKQWRETYVV (223 aa)) folds into the Glutamine amidotransferase type-1 domain. Residue cysteine 86 is the Nucleophile of the active site. Residues histidine 194 and glutamate 196 contribute to the active site.

Part of the FGAM synthase complex composed of 1 PurL, 1 PurQ and 2 PurS subunits.

It localises to the cytoplasm. The catalysed reaction is N(2)-formyl-N(1)-(5-phospho-beta-D-ribosyl)glycinamide + L-glutamine + ATP + H2O = 2-formamido-N(1)-(5-O-phospho-beta-D-ribosyl)acetamidine + L-glutamate + ADP + phosphate + H(+). The enzyme catalyses L-glutamine + H2O = L-glutamate + NH4(+). Its pathway is purine metabolism; IMP biosynthesis via de novo pathway; 5-amino-1-(5-phospho-D-ribosyl)imidazole from N(2)-formyl-N(1)-(5-phospho-D-ribosyl)glycinamide: step 1/2. Its function is as follows. Part of the phosphoribosylformylglycinamidine synthase complex involved in the purines biosynthetic pathway. Catalyzes the ATP-dependent conversion of formylglycinamide ribonucleotide (FGAR) and glutamine to yield formylglycinamidine ribonucleotide (FGAM) and glutamate. The FGAM synthase complex is composed of three subunits. PurQ produces an ammonia molecule by converting glutamine to glutamate. PurL transfers the ammonia molecule to FGAR to form FGAM in an ATP-dependent manner. PurS interacts with PurQ and PurL and is thought to assist in the transfer of the ammonia molecule from PurQ to PurL. This chain is Phosphoribosylformylglycinamidine synthase subunit PurQ, found in Bacillus cereus (strain Q1).